An 856-amino-acid chain; its full sequence is MAP kinase phosphatase with leucine-rich repeats protein 3 (856 aa).

Residues 1–10 are compositionally biased toward low complexity; it reads MGNSHSSENG. Disordered regions lie at residues 1 to 24, 84 to 195, and 214 to 326; these read MGNS…GGGS, VKKN…SSVL, and DDNS…NAKD. The N-myristoyl glycine moiety is linked to residue G2. Residues 11-24 are compositionally biased toward gly residues; it reads GNSGSGGGSGGGGS. Low complexity predominate over residues 90–142; that stretch reads NSSNNNSNNNSNNNNNNNTLNNSTIITTTTTTTTTSTPTTTIMITPPQQQQQQ. Over residues 155–165 the composition is skewed to polar residues; the sequence is ESSTPNEQQIR. Composition is skewed to low complexity over residues 178–195 and 224–243; these read ESSF…SSVL and QQQQ…QQTQ. Polar residues-rich tracts occupy residues 254–265 and 272–281; these read IVNNKSSSTTNI and AQTSRSTSIP. A compositionally biased stretch (low complexity) spans 306–323; the sequence is NSLSSSNIITPNNTTNTN. LRR repeat units follow at residues 344–365, 370–391, 392–413, 416–437, 439–461, 462–484, 485–506, and 507–528; these read KIFS…ILSI, EIQE…QLVK, SLTT…VFIE, SLTS…IDQI, NLKY…SNLS, QLIS…DDLI, NLRM…RKLV, and NLVT…FAYL. The tract at residues 554-577 is disordered; the sequence is NINSNNNDSNNSNNNNNNNNDNNN. Residues 632 to 773 enclose the Tyrosine-protein phosphatase domain; that stretch reads IPSEIIPGIF…LLKYEAKLFC (142 aa). C717 (phosphocysteine intermediate) is an active-site residue. A disordered region spans residues 810–856; it reads INNSSNSNNNNSTDNSNNSSTSTTPNLSSLSSDSSSSASLSKLSISK.

Belongs to the protein-tyrosine phosphatase family. Non-receptor class dual specificity subfamily.

It carries out the reaction O-phospho-L-tyrosyl-[protein] + H2O = L-tyrosyl-[protein] + phosphate. The enzyme catalyses O-phospho-L-seryl-[protein] + H2O = L-seryl-[protein] + phosphate. It catalyses the reaction O-phospho-L-threonyl-[protein] + H2O = L-threonyl-[protein] + phosphate. Probable phosphatase with dual specificity toward Ser/Thr and Tyr-containing proteins. This chain is MAP kinase phosphatase with leucine-rich repeats protein 3 (mpl3), found in Dictyostelium discoideum (Social amoeba).